The chain runs to 91 residues: UPF0358 protein SAB0977 (91 aa).

The protein belongs to the UPF0358 family.

The chain is UPF0358 protein SAB0977 from Staphylococcus aureus (strain bovine RF122 / ET3-1).